Consider the following 424-residue polypeptide: Virion nicking-joining enzyme (424 aa).

It belongs to the orthopoxvirus OPG042 family.

It localises to the virion. Its function is as follows. DNA nicking enzyme that cleaves extruded cruciform DNA at its tip. Probably nicks viral hairpins. The polypeptide is Virion nicking-joining enzyme (OPG042) (Cynomys gunnisoni (Gunnison's prairie dog)).